The primary structure comprises 598 residues: uncharacterized protein (598 aa).

The span at 1-23 (MSHEGSRQARDRGVTRSKAEKAR) shows a compositional bias: basic and acidic residues. Disordered regions lie at residues 1-32 (MSHE…VPQV), 151-190 (FHNE…VTPR), and 222-241 (PSKE…SPQS). The segment covering 225 to 235 (ESLRSTAEGER) has biased composition (basic and acidic residues). Residues Ser-238 and Ser-242 each carry the phosphoserine modification. Disordered stretches follow at residues 366–396 (RRSQ…SSPR) and 551–571 (AEEG…VSKP). 2 stretches are compositionally biased toward polar residues: residues 369-386 (QAGT…SSRA) and 558-569 (APEQQPIQTGVS).

This is an uncharacterized protein from Mus musculus (Mouse).